The sequence spans 160 residues: Putative UPF0479 protein YNL339W-B (160 aa).

A run of 2 helical transmembrane segments spans residues 39-59 (IVFC…KVLQ) and 136-156 (VPMI…ISQH).

Belongs to the UPF0479 family.

The protein resides in the membrane. In Saccharomyces cerevisiae (strain ATCC 204508 / S288c) (Baker's yeast), this protein is Putative UPF0479 protein YNL339W-B.